A 216-amino-acid polypeptide reads, in one-letter code: UPF0502 protein VCM66_A0698 (216 aa).

The protein belongs to the UPF0502 family.

The chain is UPF0502 protein VCM66_A0698 from Vibrio cholerae serotype O1 (strain M66-2).